The following is a 411-amino-acid chain: Mitogen-activated protein kinase 8 (411 aa).

The 296-residue stretch at 26 to 321 (YQNLKPIGSG…VDEALQHPYI (296 aa)) folds into the Protein kinase domain. ATP is bound by residues 32 to 40 (IGSGAQGIV) and lysine 55. The residue at position 116 (cysteine 116) is an S-nitrosocysteine; in inhibited form. Residue aspartate 151 is the Proton acceptor of the active site. Threonine 183 bears the Phosphothreonine; by MAP2K7 mark. The short motif at 183–185 (TPY) is the TXY element. Tyrosine 185 carries the phosphotyrosine; by MAP2K4 modification. The disordered stretch occupies residues 368–411 (KNGVIRGQPSPLGAAVINGSQHPVSSPSVNDMSSMSTDPTLASD). Serine 377 is modified (phosphoserine). Over residues 390-403 (PVSSPSVNDMSSMS) the composition is skewed to low complexity.

This sequence belongs to the protein kinase superfamily. CMGC Ser/Thr protein kinase family. MAP kinase subfamily. Forms a complex with MAPK8IP1 and ARHGEF28. Found in a complex with SH3RF1, RAC1, MAP3K11/MLK3, MAP2K7/MKK7 and MAPK8IP1/JIP1. Found in a complex with SH3RF1, RAC2, MAP3K7/TAK1, MAP2K7/MKK7, MAPK8IP1/JIP1 and MAPK9/JNK2. Binds to at least four scaffolding proteins, MAPK8IP1/JIP-1, MAPK8IP2/JIP-2, MAPK8IP3/JIP-3/JSAP1 and SPAG9/MAPK8IP4/JIP-4. These proteins also bind other components of the JNK signaling pathway. Interacts with TP53, WWOX. Interacts with JAMP. Interacts with NFATC4. Interacts (phosphorylated form) with NFE2; the interaction phosphorylates NFE2 in undifferentiated cells. Interacts with MECOM; regulates JNK signaling. Interacts with PIN1; this interaction mediates MAPK8 conformational changes leading to the binding of MAPK8 to its substrates. Interacts with HSF1 (via D domain and preferentially with hyperphosphorylated form); this interaction occurs under both normal growth conditions and immediately upon heat shock. Interacts with STMN2, STMN3 and STMN4. Interacts with GRIPAP1. Interacts with POU5F1; phosphorylates POU5F1 at 'Ser-347'. Interacts with HSF4. Mg(2+) serves as cofactor. In terms of processing, dually phosphorylated on Thr-183 and Tyr-185 by MAP2K7 and MAP2K4, which activates the enzyme. Phosphorylated by TAOK2. Phosphorylated form is more concentrated at synapses than none-phosphorylated. Nitrosylated upon IFN-gamma-induced endogenous NO production, which inhibits the enzyme. May be phosphorylated at Thr-183 and Tyr-185 by MAP3K1/MEKK1.

It is found in the cytoplasm. The protein resides in the nucleus. The protein localises to the synapse. It catalyses the reaction L-seryl-[protein] + ATP = O-phospho-L-seryl-[protein] + ADP + H(+). It carries out the reaction L-threonyl-[protein] + ATP = O-phospho-L-threonyl-[protein] + ADP + H(+). Its activity is regulated as follows. Activated by threonine and tyrosine phosphorylation by either of two dual specificity kinases, MAP2K4 and MAP2K7. MAP2K4 shows a strong preference for Tyr-185 while MAP2K7 phosphorylates Tyr-183 preferentially. Inhibited by dual specificity phosphatases, such as DUSP1. Inhibited by SERPINB3. Inhibited by IFN-gamma-induced S-nitrosylation. Serine/threonine-protein kinase involved in various processes such as cell proliferation, differentiation, migration, transformation and programmed cell death. Extracellular stimuli such as pro-inflammatory cytokines or physical stress stimulate the stress-activated protein kinase/c-Jun N-terminal kinase (SAP/JNK) signaling pathway. In this cascade, two dual specificity kinases MAP2K4/MKK4 and MAP2K7/MKK7 phosphorylate and activate MAPK8/JNK1. In turn, MAPK8/JNK1 phosphorylates a number of transcription factors, primarily components of AP-1 such as JUN, JDP2 and ATF2 and thus regulates AP-1 transcriptional activity. Phosphorylates the replication licensing factor CDT1, inhibiting the interaction between CDT1 and the histone H4 acetylase HBO1 to replication origins. Loss of this interaction abrogates the acetylation required for replication initiation. Promotes stressed cell apoptosis by phosphorylating key regulatory factors including p53/TP53 and Yes-associates protein YAP1. In T-cells, MAPK8 and MAPK9 are required for polarized differentiation of T-helper cells into Th1 cells. Contributes to the survival of erythroid cells by phosphorylating the antagonist of cell death BAD upon EPO stimulation. Mediates starvation-induced BCL2 phosphorylation, BCL2 dissociation from BECN1, and thus activation of autophagy. Phosphorylates STMN2 and hence regulates microtubule dynamics, controlling neurite elongation in cortical neurons. In the developing brain, through its cytoplasmic activity on STMN2, negatively regulates the rate of exit from multipolar stage and of radial migration from the ventricular zone. Phosphorylates several other substrates including heat shock factor protein 4 (HSF4), the deacetylase SIRT1, ELK1, or the E3 ligase ITCH. Phosphorylates the CLOCK-BMAL1 heterodimer and plays a role in the regulation of the circadian clock. Phosphorylates the heat shock transcription factor HSF1, suppressing HSF1-induced transcriptional activity. Phosphorylates POU5F1, which results in the inhibition of POU5F1's transcriptional activity and enhances its proteasomal degradation. Phosphorylates JUND and this phosphorylation is inhibited in the presence of MEN1. In neurons, phosphorylates SYT4 which captures neuronal dense core vesicles at synapses. Phosphorylates EIF4ENIF1/4-ET in response to oxidative stress, promoting P-body assembly. Phosphorylates SIRT6 in response to oxidative stress, stimulating its mono-ADP-ribosyltransferase activity. Phosphorylates NLRP3, promoting assembly of the NLRP3 inflammasome. Phosphorylates ALKBH5 in response to reactive oxygen species (ROS), promoting ALKBH5 sumoylation and inactivation. This is Mitogen-activated protein kinase 8 (Mapk8) from Rattus norvegicus (Rat).